The following is a 116-amino-acid chain: Protein Rev (116 aa).

Phosphoserine; by host CK2 is present on residues S5 and S8. The segment at 18 to 26 (LIKFLYQSN) is homomultimerization. Positions 23-48 (YQSNPPPKPEGTRQARRNRRRRWRER) are disordered. The Nuclear localization signal and RNA-binding (RRE) motif lies at 34–50 (TRQARRNRRRRWRERQR). The segment covering 36-47 (QARRNRRRRWRE) has biased composition (basic residues). The short motif at 73 to 84 (LQLPPLERLTLD) is the Nuclear export signal and binding to XPO1 element. Phosphoserine; by host is present on residues S92 and S99. The disordered stretch occupies residues 92 to 116 (SGTQGVGSPQILVESPTVLESGTKE).

The protein belongs to the HIV-1 REV protein family. As to quaternary structure, homomultimer; when bound to the RRE. Multimeric assembly is essential for activity and may involve XPO1. Binds to human KPNB1, XPO1, TNPO1, RANBP5 and IPO7. Interacts with the viral Integrase. Interacts with human KHDRBS1. Interacts with human NAP1; this interaction decreases Rev multimerization and stimulates its activity. Interacts with human DEAD-box helicases DDX3 and DDX24; these interactions may serve for viral RNA export to the cytoplasm and packaging, respectively. Interacts with human PSIP1; this interaction may inhibit HIV-1 DNA integration by promoting dissociation of the Integrase-LEDGF/p75 complex. In terms of processing, asymmetrically arginine dimethylated at one site by host PRMT6. Methylation impairs the RNA-binding activity and export of viral RNA from the nucleus to the cytoplasm. Phosphorylated by protein kinase CK2. Presence of, and maybe binding to the N-terminus of the regulatory beta subunit of CK2 is necessary for CK2-mediated Rev's phosphorylation.

Its subcellular location is the host nucleus. The protein localises to the host nucleolus. It localises to the host cytoplasm. Escorts unspliced or incompletely spliced viral pre-mRNAs (late transcripts) out of the nucleus of infected cells. These pre-mRNAs carry a recognition sequence called Rev responsive element (RRE) located in the env gene, that is not present in fully spliced viral mRNAs (early transcripts). This function is essential since most viral proteins are translated from unspliced or partially spliced pre-mRNAs which cannot exit the nucleus by the pathway used by fully processed cellular mRNAs. Rev itself is translated from a fully spliced mRNA that readily exits the nucleus. Rev's nuclear localization signal (NLS) binds directly to KPNB1/Importin beta-1 without previous binding to KPNA1/Importin alpha-1. KPNB1 binds to the GDP bound form of RAN (Ran-GDP) and targets Rev to the nucleus. In the nucleus, the conversion from Ran-GDP to Ran-GTP dissociates Rev from KPNB1 and allows Rev's binding to the RRE in viral pre-mRNAs. Rev multimerization on the RRE via cooperative assembly exposes its nuclear export signal (NES) to the surface. Rev can then form a complex with XPO1/CRM1 and Ran-GTP, leading to nuclear export of the complex. Conversion from Ran-GTP to Ran-GDP mediates dissociation of the Rev/RRE/XPO1/RAN complex, so that Rev can return to the nucleus for a subsequent round of export. Beside KPNB1, also seems to interact with TNPO1/Transportin-1, RANBP5/IPO5 and IPO7/RANBP7 for nuclear import. The nucleoporin-like HRB/RIP is an essential cofactor that probably indirectly interacts with Rev to release HIV RNAs from the perinuclear region to the cytoplasm. The protein is Protein Rev of Human immunodeficiency virus type 1 group M subtype B (isolate SC) (HIV-1).